Consider the following 322-residue polypeptide: Undecaprenyl-phosphate 4-deoxy-4-formamido-L-arabinose transferase (322 aa).

Residues 1–235 (MFEIHPVKKV…TCLTTTPLRM (235 aa)) lie on the Cytoplasmic side of the membrane. The chain crosses the membrane as a helical span at residues 236-256 (LSLLGSIIAIGGFSIAVLLVI). Residues 257-269 (LRLTFGPQWAAEG) are Periplasmic-facing. A helical transmembrane segment spans residues 270–290 (VFMLFAVLFTFIGAQFIGMGL). Residues 291 to 322 (LGEYIGRIYTDVRARPRYFVQQVIRPSSKENE) are Cytoplasmic-facing.

Belongs to the glycosyltransferase 2 family.

The protein resides in the cell inner membrane. The enzyme catalyses UDP-4-deoxy-4-formamido-beta-L-arabinose + di-trans,octa-cis-undecaprenyl phosphate = 4-deoxy-4-formamido-alpha-L-arabinopyranosyl di-trans,octa-cis-undecaprenyl phosphate + UDP. It participates in glycolipid biosynthesis; 4-amino-4-deoxy-alpha-L-arabinose undecaprenyl phosphate biosynthesis; 4-amino-4-deoxy-alpha-L-arabinose undecaprenyl phosphate from UDP-4-deoxy-4-formamido-beta-L-arabinose and undecaprenyl phosphate: step 1/2. It functions in the pathway bacterial outer membrane biogenesis; lipopolysaccharide biosynthesis. Functionally, catalyzes the transfer of 4-deoxy-4-formamido-L-arabinose from UDP to undecaprenyl phosphate. The modified arabinose is attached to lipid A and is required for resistance to polymyxin and cationic antimicrobial peptides. The polypeptide is Undecaprenyl-phosphate 4-deoxy-4-formamido-L-arabinose transferase (Escherichia coli O157:H7 (strain EC4115 / EHEC)).